Here is a 227-residue protein sequence, read N- to C-terminus: 7-cyano-7-deazaguanine synthase (227 aa).

Valine 8–leucine 18 contacts ATP. Positions 192, 202, 205, and 208 each coordinate Zn(2+).

Belongs to the QueC family. The cofactor is Zn(2+).

It carries out the reaction 7-carboxy-7-deazaguanine + NH4(+) + ATP = 7-cyano-7-deazaguanine + ADP + phosphate + H2O + H(+). Its pathway is purine metabolism; 7-cyano-7-deazaguanine biosynthesis. Functionally, catalyzes the ATP-dependent conversion of 7-carboxy-7-deazaguanine (CDG) to 7-cyano-7-deazaguanine (preQ(0)). The chain is 7-cyano-7-deazaguanine synthase from Rickettsia canadensis (strain McKiel).